The following is a 44-amino-acid chain: Small hydrophobic protein (44 aa).

Residues 1–16 (MLPDPEDPESKKATRR) lie on the Intravirion side of the membrane. Residues 17–37 (AGNLIICFLFIFFLFVTFIVP) traverse the membrane as a helical; Signal-anchor for type II membrane protein segment. Residues 38-44 (TLRHLLS) are Virion surface-facing.

It belongs to the rubulavirus small hydrophobic protein family.

Its subcellular location is the virion membrane. The protein localises to the host cell membrane. Functionally, inhibits TNF-alpha signaling and seems to block apoptosis in host infected cells. The protein is Small hydrophobic protein (SH) of Parainfluenza virus 5 (strain W3) (PIV5).